The primary structure comprises 187 residues: Ribosome-recycling factor (187 aa).

This sequence belongs to the RRF family.

Its subcellular location is the cytoplasm. Functionally, responsible for the release of ribosomes from messenger RNA at the termination of protein biosynthesis. May increase the efficiency of translation by recycling ribosomes from one round of translation to another. The sequence is that of Ribosome-recycling factor from Bradyrhizobium sp. (strain ORS 278).